The chain runs to 705 residues: Elongation factor G (705 aa).

One can recognise a tr-type G domain in the interval 8–290; sequence HRYRNIGIMA…GVIHLLPSPA (283 aa). GTP-binding positions include 17 to 24, 88 to 92, and 142 to 145; these read AHIDAGKT, DTPGH, and NKMD.

Belongs to the TRAFAC class translation factor GTPase superfamily. Classic translation factor GTPase family. EF-G/EF-2 subfamily.

It is found in the cytoplasm. Catalyzes the GTP-dependent ribosomal translocation step during translation elongation. During this step, the ribosome changes from the pre-translocational (PRE) to the post-translocational (POST) state as the newly formed A-site-bound peptidyl-tRNA and P-site-bound deacylated tRNA move to the P and E sites, respectively. Catalyzes the coordinated movement of the two tRNA molecules, the mRNA and conformational changes in the ribosome. This Xylella fastidiosa (strain 9a5c) protein is Elongation factor G.